A 346-amino-acid polypeptide reads, in one-letter code: Acrosin (346 aa).

The N-terminal stretch at 1–19 (MALLLPLAVLLAACRPGHG) is a signal peptide. 6 disulfide bridges follow: C24-C146, C27-C154, C70-C86, C168-C240, C203-C219, and C230-C260. Residues 41 to 284 (VVGGTEALHG…FYNWILLQVR (244 aa)) enclose the Peptidase S1 domain. Catalysis depends on H85, which acts as the Charge relay system. An N-linked (GlcNAc...) asparagine glycan is attached at N128. The active-site Charge relay system is the D134. The N-linked (GlcNAc...) asparagine glycan is linked to N204. S234 (charge relay system) is an active-site residue. Residues 266–346 (PGIYTSTQHF…LLQSLWGSKA (81 aa)) constitute a propeptide that is removed on maturation.

Belongs to the peptidase S1 family. In terms of assembly, heavy chain (catalytic) and a light chain linked by two disulfide bonds. Glycosylated.

The catalysed reaction is Preferential cleavage: Arg-|-Xaa, Lys-|-Xaa.. Its activity is regulated as follows. Inhibited by aprotinin, ovomucoid, soybean trypsin inhibitor, benzamidine, p-aminobenzamidine, and zinc ions. Activity also inhibited by a Kazal-type proteinase inhibitor. Serine protease of trypsin-like cleavage specificity. Synthesized in a zymogen form, proacrosin and stored in the acrosome. This Meleagris gallopavo (Wild turkey) protein is Acrosin.